A 512-amino-acid polypeptide reads, in one-letter code: AMP phosphorylase (512 aa).

Residues Gly-166, 192 to 197 (SRAITG), and Thr-201 each bind AMP. Residue Asp-254 is the Proton donor of the active site. Residues Ser-262 and Lys-286 each contribute to the AMP site.

It belongs to the thymidine/pyrimidine-nucleoside phosphorylase family. Type 2 subfamily.

The catalysed reaction is AMP + phosphate = alpha-D-ribose 1,5-bisphosphate + adenine. It catalyses the reaction CMP + phosphate = cytosine + alpha-D-ribose 1,5-bisphosphate. It carries out the reaction UMP + phosphate = alpha-D-ribose 1,5-bisphosphate + uracil. Functionally, catalyzes the conversion of AMP and phosphate to adenine and ribose 1,5-bisphosphate (R15P). Exhibits phosphorylase activity toward CMP and UMP in addition to AMP. Functions in an archaeal AMP degradation pathway, together with R15P isomerase and RubisCO. In Methanothrix thermoacetophila (strain DSM 6194 / JCM 14653 / NBRC 101360 / PT) (Methanosaeta thermophila), this protein is AMP phosphorylase.